Here is a 311-residue protein sequence, read N- to C-terminus: Solute carrier family 25 member 36 (311 aa).

Solcar repeat units lie at residues 4–108 (RDTL…CKEK), 116–203 (DSTQ…IKQK), and 224–308 (SDFV…VVYL). The next 6 helical transmembrane spans lie at 7–27 (LVHL…TCPL), 41–57 (LYIS…ASVN), 111–131 (GVFD…AGFT), 180–200 (MSAS…YESI), 226–246 (FVRM…IAYP), and 291–311 (QIPN…LLNG).

Belongs to the mitochondrial carrier (TC 2.A.29) family.

It is found in the mitochondrion inner membrane. It carries out the reaction UTP(in) + CTP(out) = UTP(out) + CTP(in). The catalysed reaction is CTP(out) + UDP(in) = CTP(in) + UDP(out). It catalyses the reaction UMP(in) + CTP(out) = UMP(out) + CTP(in). The enzyme catalyses dUTP(in) + CTP(out) = dUTP(out) + CTP(in). It carries out the reaction dUMP(in) + CTP(out) = dUMP(out) + CTP(in). The catalysed reaction is CDP(in) + CTP(out) = CDP(out) + CTP(in). It catalyses the reaction CTP(out) + CMP(in) = CTP(in) + CMP(out). The enzyme catalyses dCTP(in) + CTP(out) = dCTP(out) + CTP(in). It carries out the reaction dCDP(in) + CTP(out) = dCDP(out) + CTP(in). The catalysed reaction is dCMP(in) + CTP(out) = dCMP(out) + CTP(in). It catalyses the reaction GTP(in) + CTP(out) = GTP(out) + CTP(in). The enzyme catalyses CTP(out) + GDP(in) = CTP(in) + GDP(out). It carries out the reaction GMP(in) + CTP(out) = GMP(out) + CTP(in). The catalysed reaction is dGTP(in) + CTP(out) = dGTP(out) + CTP(in). It catalyses the reaction dGMP(in) + CTP(out) = dGMP(out) + CTP(in). The enzyme catalyses ITP(in) + CTP(out) = ITP(out) + CTP(in). It carries out the reaction IDP(in) + CTP(out) = IDP(out) + CTP(in). The catalysed reaction is IMP(in) + CTP(out) = IMP(out) + CTP(in). It catalyses the reaction CTP(out) = CTP(in). In terms of biological role, mitochondrial transporter that imports/exports pyrimidine nucleotides into and from mitochondria. Selectively transports cytosine, guanosine, inosine and uridine (deoxy)nucleoside mono-, di-, and triphosphates by antiport mechanism. Catalyzes uniport at much lower rate. May import (deoxy)nucleoside triphosphates in exchange for intramitochondrial (deoxy)nucleoside mono- and diphosphates, thus providing precursors necessary for de novo synthesis of mitochondrial DNA and RNA while exporting products of their catabolism. Participates in mitochondrial genome maintenance, regulation of mitochondrial membrane potential and mitochondrial respiration. In Mus musculus (Mouse), this protein is Solute carrier family 25 member 36 (Slc25a36).